We begin with the raw amino-acid sequence, 46 residues long: Myoregulin (46 aa).

Topologically, residues 1–21 are cytoplasmic; the sequence is MSGKSWVLISTTSPQSLEDEI. Residues 22 to 42 traverse the membrane as a helical segment; it reads LGRLLKILFVLFVDLMSIMYV. Over 43-46 the chain is Lumenal; that stretch reads VITS.

Homooligomer. Monomer. Interacts with ATP2A1/SERCA1. Interacts as a monomer with ATP2A2/SERCA2; the interaction inhibits ATP2A2 activity. Specifically expressed in all skeletal muscles. Detected in both fast- and slow-type skeletal muscle. Not expressed in cardiac or smooth muscles.

Its subcellular location is the sarcoplasmic reticulum membrane. In terms of biological role, inhibits the activity of ATP2A1/SERCA1 ATPase in sarcoplasmic reticulum by decreasing the apparent affinity of the ATPase for Ca(2+), thereby acting as a key regulator of skeletal muscle activity. Its high expression in adult skeletal muscle, suggests that it constitutes the predominant regulator of ATP2A1/SERCA1 in adult skeletal muscle. Also inhibits the activity of ATP2A2/SERCA2 and ATP2A3/SERCA3. The sequence is that of Myoregulin from Mus musculus (Mouse).